Consider the following 66-residue polypeptide: Large ribosomal subunit protein uL29 (66 aa).

This sequence belongs to the universal ribosomal protein uL29 family.

The chain is Large ribosomal subunit protein uL29 from Thermoplasma volcanium (strain ATCC 51530 / DSM 4299 / JCM 9571 / NBRC 15438 / GSS1).